The sequence spans 135 residues: Small ribosomal subunit protein uS11 (135 aa).

The disordered stretch occupies residues 1 to 26 (MPPKSRTAGGARKTRRKEKKNVSHGH). The segment covering 12–23 (RKTRRKEKKNVS) has biased composition (basic residues).

The protein belongs to the universal ribosomal protein uS11 family. In terms of assembly, part of the 30S ribosomal subunit. Interacts with proteins S7 and S18. Binds to IF-3.

Its function is as follows. Located on the platform of the 30S subunit, it bridges several disparate RNA helices of the 16S rRNA. Forms part of the Shine-Dalgarno cleft in the 70S ribosome. This is Small ribosomal subunit protein uS11 from Beutenbergia cavernae (strain ATCC BAA-8 / DSM 12333 / CCUG 43141 / JCM 11478 / NBRC 16432 / NCIMB 13614 / HKI 0122).